The sequence spans 817 residues: Leucine--tRNA ligase (817 aa).

A 'HIGH' region motif is present at residues 42–52; sequence PYPSGRLHMGH. A 'KMSKS' region motif is present at residues 576 to 580; the sequence is KMSKS. Position 579 (lysine 579) interacts with ATP.

The protein belongs to the class-I aminoacyl-tRNA synthetase family.

The protein localises to the cytoplasm. It catalyses the reaction tRNA(Leu) + L-leucine + ATP = L-leucyl-tRNA(Leu) + AMP + diphosphate. This chain is Leucine--tRNA ligase, found in Thioalkalivibrio sulfidiphilus (strain HL-EbGR7).